Consider the following 109-residue polypeptide: Movement protein (109 aa).

The segment at 1 to 28 (MDSFGRAPPLWPQSALPRVPGAAPSSSG) is disordered. Residues 34-54 (VGEIAIFTFVAVLALYLLWSW) traverse the membrane as a helical segment.

The protein belongs to the mastrevirus movement protein family. Interacts with the capsid protein (CP). Part of a MP-CP-viral DNA complex.

The protein localises to the host membrane. Its function is as follows. Involved in the viral transport within, and between cells. This Sugarcane streak virus (isolate South Africa) (SSV) protein is Movement protein.